We begin with the raw amino-acid sequence, 134 residues long: Ribosome-binding factor A (134 aa).

This sequence belongs to the RbfA family. In terms of assembly, monomer. Binds 30S ribosomal subunits, but not 50S ribosomal subunits or 70S ribosomes.

The protein resides in the cytoplasm. One of several proteins that assist in the late maturation steps of the functional core of the 30S ribosomal subunit. Associates with free 30S ribosomal subunits (but not with 30S subunits that are part of 70S ribosomes or polysomes). Required for efficient processing of 16S rRNA. May interact with the 5'-terminal helix region of 16S rRNA. The chain is Ribosome-binding factor A from Sinorhizobium medicae (strain WSM419) (Ensifer medicae).